The following is a 186-amino-acid chain: Ribosome-recycling factor (186 aa).

This sequence belongs to the RRF family.

It localises to the cytoplasm. In terms of biological role, responsible for the release of ribosomes from messenger RNA at the termination of protein biosynthesis. May increase the efficiency of translation by recycling ribosomes from one round of translation to another. The protein is Ribosome-recycling factor of Ralstonia pickettii (strain 12J).